The primary structure comprises 559 residues: Proline--tRNA ligase (559 aa).

The protein belongs to the class-II aminoacyl-tRNA synthetase family. ProS type 1 subfamily. Homodimer.

It is found in the cytoplasm. The enzyme catalyses tRNA(Pro) + L-proline + ATP = L-prolyl-tRNA(Pro) + AMP + diphosphate. In terms of biological role, catalyzes the attachment of proline to tRNA(Pro) in a two-step reaction: proline is first activated by ATP to form Pro-AMP and then transferred to the acceptor end of tRNA(Pro). As ProRS can inadvertently accommodate and process non-cognate amino acids such as alanine and cysteine, to avoid such errors it has two additional distinct editing activities against alanine. One activity is designated as 'pretransfer' editing and involves the tRNA(Pro)-independent hydrolysis of activated Ala-AMP. The other activity is designated 'posttransfer' editing and involves deacylation of mischarged Ala-tRNA(Pro). The misacylated Cys-tRNA(Pro) is not edited by ProRS. The protein is Proline--tRNA ligase of Ruthia magnifica subsp. Calyptogena magnifica.